We begin with the raw amino-acid sequence, 219 residues long: MNPTSVEVSTTNIEVNQKSQCTVDAPSDCQCNLTSETVIDVNDKIDVVVVDTSDNIPKPQITEKVVEKEVVEQVKKTSTIKVRLEAKTKLNYINQFLDQAPKESVVLHKGLDVELVSGITISIGDNRENKYTVVSDWLPVPVHATNINTPNPNNLTSVNCVLPSETVVLTDRGLPWKLPVDFSVELPNPCPVTIYAGTKLQQNEFQVVLASDCKVNVVY.

This is an uncharacterized protein from Acanthamoeba polyphaga mimivirus (APMV).